We begin with the raw amino-acid sequence, 499 residues long: Serine/threonine-protein phosphatase 5 (499 aa).

The disordered stretch occupies residues 1-23 (MAMAEGERTECAEPPRDEPPAEG). Alanine 2 is modified (N-acetylalanine). TPR repeat units lie at residues 28–61 (AEEL…NPSN), 62–95 (AIYY…DKKY), and 96–129 (IKGY…KPND). Positions 200–499 (DQKKLHRKCA…ANTLLQLGMM (300 aa)) are catalytic. Positions 242, 244, and 271 each coordinate Mg(2+). Residue histidine 244 coordinates substrate. Substrate contacts are provided by residues arginine 275 and 303 to 304 (NH). Position 303 (asparagine 303) interacts with Mg(2+). Histidine 304 functions as the Proton donor/acceptor in the catalytic mechanism. Mg(2+) is bound at residue histidine 352. Positions 400 and 427 each coordinate substrate. Histidine 427 lines the Mg(2+) pocket. Residues 495 to 499 (QLGMM) form a required for autoinhibition region.

The protein belongs to the PPP phosphatase family. PP-5 (PP-T) subfamily. Probably forms a complex composed of chaperones HSP90 and HSP70, co-chaperones STIP1/HOP, CDC37, PPP5C, PTGES3/p23, TSC1 and client protein TSC2. Probably forms a complex composed of chaperones HSP90 and HSP70, co-chaperones CDC37, PPP5C, TSC1 and client protein TSC2, CDK4, AKT, RAF1 and NR3C1; this complex does not contain co-chaperones STIP1/HOP and PTGES3/p23. Part of a complex with HSP90/HSP90AA1 and steroid receptors. Interacts (via TPR repeats) with HSP90AA1 (via TPR repeat-binding motif) or HSPA1A/HSPA1B; the interaction is direct and activates the phosphatase activity. Dissociates from HSPA1A/HSPA1B and HSP90AA1 in response to arachidonic acid. Interacts with CPNE1 (via VWFA domain). Interacts with CDC16, CDC27. Interacts with KLHDC10 (via the 6 Kelch repeats); inhibits the phosphatase activity on MAP3K5. Interacts with ATM and ATR; both interactions are induced by DNA damage and enhance ATM and ATR kinase activity. Interacts with RAD17; reduced by DNA damage. Interacts with nuclear receptors such as NR3C1/GCR and PPARG (activated by agonist); regulates their transactivation activities. Interacts (via TPR repeats) with S100 proteins S100A1, S100A2, S100A6, S100B and S100P; the interactions are calcium-dependent, strongly activate PPP5C phosphatase activity and compete with HSP90AA1 and MAP3K5 interactions. Interacts with SMAD2 and SMAD3 but not with SMAD1; decreases SMAD3 phosphorylation and protein levels. Interacts (via TPR repeats) with CRY1 and CRY2; the interaction with CRY2 down-regulates the phosphatase activity on CSNK1E. Interacts (via TPR repeats) with the active form of RAC1, GNA12 or GNA13; these interactions activate the phosphatase activity and translocate PPP5C to the cell membrane. Interacts with FLCN. The cofactor is Mg(2+). It depends on Mn(2+) as a cofactor. Activated by at least two different proteolytic cleavages producing a 56 kDa and a 50 kDa form. As to expression, predominantly found in brain and, in lower levels, in testis, but was nearly undetectable in spleen, lung, skeletal muscle, kidney and liver.

It is found in the nucleus. Its subcellular location is the cytoplasm. The protein resides in the cell membrane. It catalyses the reaction O-phospho-L-seryl-[protein] + H2O = L-seryl-[protein] + phosphate. The catalysed reaction is O-phospho-L-threonyl-[protein] + H2O = L-threonyl-[protein] + phosphate. Autoinhibited. In the autoinhibited state, the TPR domain interacts with the catalytic region and prevents substrate access to the catalytic pocket. Allosterically activated by various polyunsaturated fatty acids, free long-chain fatty-acids and long-chain fatty acyl-CoA esters, arachidonic acid being the most effective activator. HSP90A and probably RAC1, GNA12 and GNA13 can also release the autoinhibition by the TPR repeat. Activation by RAC1, GNA12 and GNA13 is synergistic with the one produced by fatty acids binding. Inhibited by okadaic acid. Functionally, serine/threonine-protein phosphatase that dephosphorylates a myriad of proteins involved in different signaling pathways including the kinases CSNK1E, ASK1/MAP3K5, PRKDC and RAF1, the nuclear receptors NR3C1, PPARG, ESR1 and ESR2, SMAD proteins and TAU/MAPT. Implicated in wide ranging cellular processes, including apoptosis, differentiation, DNA damage response, cell survival, regulation of ion channels or circadian rhythms, in response to steroid and thyroid hormones, calcium, fatty acids, TGF-beta as well as oxidative and genotoxic stresses. Participates in the control of DNA damage response mechanisms such as checkpoint activation and DNA damage repair through, for instance, the regulation ATM/ATR-signaling and dephosphorylation of PRKDC and TP53BP1. Inhibits ASK1/MAP3K5-mediated apoptosis induced by oxidative stress. Plays a positive role in adipogenesis, mainly through the dephosphorylation and activation of PPARG transactivation function. Also dephosphorylates and inhibits the anti-adipogenic effect of NR3C1. Regulates the circadian rhythms, through the dephosphorylation and activation of CSNK1E. May modulate TGF-beta signaling pathway by the regulation of SMAD3 phosphorylation and protein expression levels. Dephosphorylates and may play a role in the regulation of TAU/MAPT. Through their dephosphorylation, may play a role in the regulation of ions channels such as KCNH2. Dephosphorylate FNIP1, disrupting interaction with HSP90AA1/Hsp90. In Rattus norvegicus (Rat), this protein is Serine/threonine-protein phosphatase 5 (Ppp5c).